The following is a 785-amino-acid chain: Uncoating factor OPG117 (785 aa).

This sequence belongs to the orthopoxvirus OPG117 family. As to quaternary structure, homomultimer; hexamer. Interacts with OPG148.

It is found in the host cytoplasm. Functionally, multifunctional protein required for genome uncoating and replication. Major viral uncoating protein that is required for the release of the viral genome from incoming viral cores containing the viral DNA genome. Possesses an ATPase activity that is required for hexamerization and uncoating. The sequence is that of Uncoating factor OPG117 (OPG117) from Cynomys gunnisoni (Gunnison's prairie dog).